The chain runs to 1346 residues: Toll-like receptor Tollo (1346 aa).

An N-terminal signal peptide occupies residues 1-21; sequence MLATTHMLYVLIATCVIPIFG. Residues 22 to 1021 lie on the Extracellular side of the membrane; it reads AALSKTVLYQ…NQPPKLDYIP (1000 aa). Residues Asn-63, Asn-112, and Asn-126 are each glycosylated (N-linked (GlcNAc...) asparagine). 23 LRR repeats span residues 97–120, 124–146, 151–174, 176–198, 209–232, 234–256, 257–280, 282–304, 306–330, 331–354, 355–378, 380–402, 404–426, 427–450, 452–473, 474–497, 498–521, 523–544, 546–568, 570–591, 593–614, 615–637, and 638–661; these read LVEL…SFRG, LRNL…MASN, FRQL…MVCP, KSLQ…YFSA, GSTL…MLSA, GRLT…AFEG, LLSL…LFAE, KQLQ…IFGE, AELL…TFVG, LKRL…IFRP, LASL…IFAD, TNLH…TLQG, KNLL…SLVN, CSQL…LAHV, LLKT…SITQ, LESL…VFDR, MSSL…SLQR, SQLQ…LFTE, PNLV…HIPI, LQWL…EIES, LSLS…SSIP, NSVE…TFFK, and KPNL…ALRL. An N-linked (GlcNAc...) asparagine glycan is attached at Asn-182. An N-linked (GlcNAc...) asparagine glycan is attached at Asn-291. N-linked (GlcNAc...) asparagine glycosylation occurs at Asn-426. Asn-468 carries N-linked (GlcNAc...) asparagine glycosylation. Asn-505 carries an N-linked (GlcNAc...) asparagine glycan. N-linked (GlcNAc...) asparagine glycosylation is present at Asn-552. N-linked (GlcNAc...) asparagine glycosylation is present at Asn-640. 4 cysteine pairs are disulfide-bonded: Cys-682-Cys-710, Cys-684-Cys-733, Cys-757-Cys-763, and Cys-761-Cys-776. LRR repeat units lie at residues 790-813, 814-837, 838-861, 863-885, 887-909, and 912-938; these read PMDS…AFIG, RKRL…TFYG, LLEL…EFQG, DNLQ…TFTH, YHLK…NFLP, and LNEL…YINR. Asn-823 and Asn-832 each carry an N-linked (GlcNAc...) asparagine glycan. The cysteines at positions 924 and 950 are disulfide-linked. N-linked (GlcNAc...) asparagine glycans are attached at residues Asn-956 and Asn-1000. The chain crosses the membrane as a helical span at residues 1022 to 1042; the sequence is ILVAILTAFIFVMICISLVFI. At 1043–1346 the chain is on the cytoplasmic side; sequence FRQEMRVWCH…PTPASRNLHM (304 aa). The 136-residue stretch at 1074–1209 folds into the TIR domain; sequence KLFDAFVSYS…LFWQKLRFAL (136 aa). The tract at residues 1235-1346 is disordered; that stretch reads HHHHHVHQQA…PTPASRNLHM (112 aa). A compositionally biased stretch (low complexity) spans 1267-1300; that stretch reads PGSFRRQPSLHQQQQQQQQIRGNNNTTQQQQQQQ.

The protein belongs to the Toll-like receptor family. May interact (via the extracellular domain) with 18w (via the extracellular domain).

It localises to the cell membrane. Its subcellular location is the apical cell membrane. Its function is as follows. Toll-related receptor. Probably specific to larval innate immunity. Involved in the tracheal immune response of larvae to Gram-negative and perhaps Gram-positive bacteria; upon infection it negatively regulates the immune deficiency (Imd) signaling cascade specifically in the respiratory epithelium to prevent the overexpression of antimicrobial peptides (AMP). Involved in the NF-kappa-B-dependent apoptosis of unfit cells during cell competition. Involved in neuron-specific glycosylation. Positively controls the neuromuscular junction (NMJ) growth in presynaptic motorneurons, probably via the JNK pathway. During development of the peripheral nervous system, may function in the NF-kappa-B (rel) regulatory cascade to repress expression of the neuron-specific genes sc and ase in non-neuronal cells. Promotes heterophilic cell adhesion with 18w in vitro. May have a minor role in leg development. May be involved in determining the proximal cell fate in the wing, possibly by negatively regulating the Dpp signaling pathway. May also be involved in the Dpp signaling pathway in the eye. Possibly functions with 18w and Toll-6 during convergent extension, to help direct proper planar cell polarity, cell intercalation and axis elongation. This chain is Toll-like receptor Tollo, found in Drosophila melanogaster (Fruit fly).